Consider the following 283-residue polypeptide: Thymidylate synthase (283 aa).

Residue Arg22 participates in dUMP binding. Cys160 serves as the catalytic Nucleophile. DUMP-binding positions include 180 to 183 (RSCD), Asn191, and 221 to 223 (HIY). Residue Asp183 participates in (6R)-5,10-methylene-5,6,7,8-tetrahydrofolate binding. (6R)-5,10-methylene-5,6,7,8-tetrahydrofolate is bound at residue Ser282.

Belongs to the thymidylate synthase family. Bacterial-type ThyA subfamily. Homodimer.

It localises to the cytoplasm. It carries out the reaction dUMP + (6R)-5,10-methylene-5,6,7,8-tetrahydrofolate = 7,8-dihydrofolate + dTMP. It functions in the pathway pyrimidine metabolism; dTTP biosynthesis. Catalyzes the reductive methylation of 2'-deoxyuridine-5'-monophosphate (dUMP) to 2'-deoxythymidine-5'-monophosphate (dTMP) while utilizing 5,10-methylenetetrahydrofolate (mTHF) as the methyl donor and reductant in the reaction, yielding dihydrofolate (DHF) as a by-product. This enzymatic reaction provides an intracellular de novo source of dTMP, an essential precursor for DNA biosynthesis. This is Thymidylate synthase from Haemophilus influenzae (strain PittGG).